The sequence spans 111 residues: Universal stress protein B (111 aa).

2 helical membrane passes run 1 to 21 (MISTFALFWALCIVCIINMAR) and 90 to 110 (FLLTTALCGLIVISLIAMMMW).

The protein belongs to the universal stress protein B family.

Its subcellular location is the cell inner membrane. The protein is Universal stress protein B of Pectobacterium atrosepticum (strain SCRI 1043 / ATCC BAA-672) (Erwinia carotovora subsp. atroseptica).